A 326-amino-acid polypeptide reads, in one-letter code: DnaJ homolog subfamily B member 6 (326 aa).

The J domain occupies Val2–Gly69. Positions Val2–Gly146 are interaction with HSP70. Positions Phe119–Arg242 are interaction with KRT18. Residue Arg135 is modified to Omega-N-methylarginine. A disordered region spans residues Ala249 to His326. Ser277 carries the phosphoserine modification.

Homooligomer. Interacts with BAG3, HSPB8 and STUB1. Interacts with ALKBH1. Interacts with HSP70, KRT18 and PTTG. In terms of assembly, interacts with histone deacetylases HDAC4, HDAC6, and SIRT2, HDAC activity is required for antiaggregation. As to expression, widely expressed. Highest levels in testis and brain, and lower levels in heart, spleen, intestine, ovary, placenta, lung, kidney, pancreas, thymus, prostate, skeletal muscle, liver and leukocytes. In testis, expressed in germ cells in the earlier stages of differentiation pathway as well as in spermatids. In brain, expressed at a higher level in hippocampus and thalamus and a lower level in amygdala, substantia nigra, corpus callosum and caudate nucleus.

The protein resides in the cytoplasm. It is found in the perinuclear region. It localises to the nucleus. Its subcellular location is the myofibril. The protein localises to the sarcomere. The protein resides in the z line. Functionally, has a stimulatory effect on the ATPase activity of HSP70 in a dose-dependent and time-dependent manner and hence acts as a co-chaperone of HSP70. Plays an indispensable role in the organization of KRT8/KRT18 filaments. Acts as an endogenous molecular chaperone for neuronal proteins including huntingtin. Suppresses aggregation and toxicity of polyglutamine-containing, aggregation-prone proteins. Also reduces cellular toxicity and caspase-3 activity. Isoform B but not isoform A inhibits huntingtin aggregation. The polypeptide is DnaJ homolog subfamily B member 6 (DNAJB6) (Homo sapiens (Human)).